The chain runs to 357 residues: DNA replication and repair protein RecF (357 aa).

30–37 (GANGSGKT) serves as a coordination point for ATP.

Belongs to the RecF family.

Its subcellular location is the cytoplasm. The RecF protein is involved in DNA metabolism; it is required for DNA replication and normal SOS inducibility. RecF binds preferentially to single-stranded, linear DNA. It also seems to bind ATP. In Shigella flexneri serotype 5b (strain 8401), this protein is DNA replication and repair protein RecF.